The sequence spans 371 residues: 4-hydroxy-3-methylbut-2-en-1-yl diphosphate synthase (flavodoxin) (371 aa).

[4Fe-4S] cluster contacts are provided by Cys-270, Cys-273, Cys-305, and Glu-312.

Belongs to the IspG family. It depends on [4Fe-4S] cluster as a cofactor.

It carries out the reaction (2E)-4-hydroxy-3-methylbut-2-enyl diphosphate + oxidized [flavodoxin] + H2O + 2 H(+) = 2-C-methyl-D-erythritol 2,4-cyclic diphosphate + reduced [flavodoxin]. It functions in the pathway isoprenoid biosynthesis; isopentenyl diphosphate biosynthesis via DXP pathway; isopentenyl diphosphate from 1-deoxy-D-xylulose 5-phosphate: step 5/6. Converts 2C-methyl-D-erythritol 2,4-cyclodiphosphate (ME-2,4cPP) into 1-hydroxy-2-methyl-2-(E)-butenyl 4-diphosphate. This Shewanella piezotolerans (strain WP3 / JCM 13877) protein is 4-hydroxy-3-methylbut-2-en-1-yl diphosphate synthase (flavodoxin).